A 287-amino-acid polypeptide reads, in one-letter code: ATP synthase gamma chain (287 aa).

Belongs to the ATPase gamma chain family. In terms of assembly, F-type ATPases have 2 components, CF(1) - the catalytic core - and CF(0) - the membrane proton channel. CF(1) has five subunits: alpha(3), beta(3), gamma(1), delta(1), epsilon(1). CF(0) has three main subunits: a, b and c.

Its subcellular location is the cell membrane. Functionally, produces ATP from ADP in the presence of a proton gradient across the membrane. The gamma chain is believed to be important in regulating ATPase activity and the flow of protons through the CF(0) complex. This is ATP synthase gamma chain from Wolbachia sp. subsp. Drosophila simulans (strain wRi).